We begin with the raw amino-acid sequence, 190 residues long: Recombination protein RecR (190 aa).

A C4-type zinc finger spans residues 58-73; sequence CEQCGALSENELCEIC. Residues 81 to 167 form the Toprim domain; sequence NILCIVESPK…TFSKIAQGIP (87 aa).

The protein belongs to the RecR family.

May play a role in DNA repair. It seems to be involved in an RecBC-independent recombinational process of DNA repair. It may act with RecF and RecO. In Campylobacter jejuni (strain RM1221), this protein is Recombination protein RecR.